A 189-amino-acid polypeptide reads, in one-letter code: Probable nicotinate-nucleotide adenylyltransferase (189 aa).

Belongs to the NadD family.

It carries out the reaction nicotinate beta-D-ribonucleotide + ATP + H(+) = deamido-NAD(+) + diphosphate. Its pathway is cofactor biosynthesis; NAD(+) biosynthesis; deamido-NAD(+) from nicotinate D-ribonucleotide: step 1/1. Its function is as follows. Catalyzes the reversible adenylation of nicotinate mononucleotide (NaMN) to nicotinic acid adenine dinucleotide (NaAD). The chain is Probable nicotinate-nucleotide adenylyltransferase from Bacillus licheniformis (strain ATCC 14580 / DSM 13 / JCM 2505 / CCUG 7422 / NBRC 12200 / NCIMB 9375 / NCTC 10341 / NRRL NRS-1264 / Gibson 46).